The chain runs to 218 residues: Glutathione S-transferase Mu 2 (218 aa).

A GST N-terminal domain is found at P2–G88. Residue Y7–W8 coordinates glutathione. Phosphoserine occurs at positions 27 and 44. Glutathione is bound by residues R43 to W46, K50, N59 to L60, and Q72 to S73. A GST C-terminal domain is found at T90–F214. Substrate is bound at residue Y116. A Phosphoserine modification is found at S117.

It belongs to the GST superfamily. Mu family. In terms of assembly, homodimer or heterodimer.

It is found in the cytoplasm. It catalyses the reaction RX + glutathione = an S-substituted glutathione + a halide anion + H(+). It carries out the reaction 11(S)-hydroxy-14(S),15(S)-epoxy-(5Z,8Z,12E)-eicosatrienoate + glutathione = (11S,15S)-dihydroxy-14(R)-S-glutathionyl-(5Z,8Z,12E)-eicosatrienoate. Its function is as follows. Conjugation of reduced glutathione to a wide number of exogenous and endogenous hydrophobic electrophiles. Participates in the formation of novel hepoxilin regioisomers. This Rattus norvegicus (Rat) protein is Glutathione S-transferase Mu 2.